The chain runs to 342 residues: Ketol-acid reductoisomerase (NADP(+)) (342 aa).

The region spanning Ala-2–Thr-182 is the KARI N-terminal Rossmann domain. NADP(+) is bound by residues Tyr-25–Gln-28, Arg-48, Ser-51, Ser-53, and Asp-83–Gln-86. His-108 is an active-site residue. Gly-134 lines the NADP(+) pocket. Positions Thr-183–Val-328 constitute a KARI C-terminal knotted domain. 4 residues coordinate Mg(2+): Asp-191, Glu-195, Glu-227, and Glu-231. Ser-252 lines the substrate pocket.

Belongs to the ketol-acid reductoisomerase family. Requires Mg(2+) as cofactor.

The catalysed reaction is (2R)-2,3-dihydroxy-3-methylbutanoate + NADP(+) = (2S)-2-acetolactate + NADPH + H(+). It carries out the reaction (2R,3R)-2,3-dihydroxy-3-methylpentanoate + NADP(+) = (S)-2-ethyl-2-hydroxy-3-oxobutanoate + NADPH + H(+). The protein operates within amino-acid biosynthesis; L-isoleucine biosynthesis; L-isoleucine from 2-oxobutanoate: step 2/4. Its pathway is amino-acid biosynthesis; L-valine biosynthesis; L-valine from pyruvate: step 2/4. Functionally, involved in the biosynthesis of branched-chain amino acids (BCAA). Catalyzes an alkyl-migration followed by a ketol-acid reduction of (S)-2-acetolactate (S2AL) to yield (R)-2,3-dihydroxy-isovalerate. In the isomerase reaction, S2AL is rearranged via a Mg-dependent methyl migration to produce 3-hydroxy-3-methyl-2-ketobutyrate (HMKB). In the reductase reaction, this 2-ketoacid undergoes a metal-dependent reduction by NADPH to yield (R)-2,3-dihydroxy-isovalerate. In Beutenbergia cavernae (strain ATCC BAA-8 / DSM 12333 / CCUG 43141 / JCM 11478 / NBRC 16432 / NCIMB 13614 / HKI 0122), this protein is Ketol-acid reductoisomerase (NADP(+)).